Here is a 331-residue protein sequence, read N- to C-terminus: Junctional sarcoplasmic reticulum protein 1 (331 aa).

2 disordered regions span residues 1-118 (MSMT…EELP) and 157-331 (RVPE…KGRD). Residues 3-76 (MTTRAWEELD…EKEPAARGTP (74 aa)) are mediates interaction with CACNA1S. 2 stretches are compositionally biased toward basic and acidic residues: residues 21–35 (LEDHSALAETQEDRA) and 61–71 (TRPKKMEKEPA). Pro residues-rich tracts occupy residues 103-112 (PLQPPPPPPA) and 161-175 (PWVPPSSAPREPSSP). 2 stretches are compositionally biased toward basic and acidic residues: residues 222-242 (AVREDRVTLADRGPKERPRRE) and 250-302 (PRKE…EPRK). Residues 320–331 (SRQKLRAGKGRD) are compositionally biased toward basic residues.

As to quaternary structure, interacts with CACNA1S, CACNB1 and calsequestrin.

Its subcellular location is the sarcoplasmic reticulum membrane. The protein resides in the endoplasmic reticulum membrane. Involved in skeletal muscle excitation/contraction coupling (EC), probably acting as a regulator of the voltage-sensitive calcium channel CACNA1S. EC is a physiological process whereby an electrical signal (depolarization of the plasma membrane) is converted into a chemical signal, a calcium gradient, by the opening of ryanodine receptor calcium release channels. May regulate CACNA1S membrane targeting and activity. This Homo sapiens (Human) protein is Junctional sarcoplasmic reticulum protein 1 (JSRP1).